The primary structure comprises 56 residues: Large ribosomal subunit protein eL37 (56 aa).

The Zn(2+) site is built by Cys19, Cys22, Cys34, and Cys37. The segment at 19 to 37 (CRRCGSVSLNVHTKQCTSC) adopts a C4-type zinc-finger fold.

Belongs to the eukaryotic ribosomal protein eL37 family. Zn(2+) is required as a cofactor.

Binds to the 23S rRNA. This chain is Large ribosomal subunit protein eL37, found in Methanosarcina mazei (strain ATCC BAA-159 / DSM 3647 / Goe1 / Go1 / JCM 11833 / OCM 88) (Methanosarcina frisia).